We begin with the raw amino-acid sequence, 74 residues long: Mitochondrial import receptor subunit TOM6 homolog (74 aa).

Residues 1 to 14 (MASSGAGVTAAGSA) are compositionally biased toward low complexity. The interval 1–24 (MASSGAGVTAAGSANEAPEIPDNV) is disordered. N-acetylalanine is present on Ala-2.

It belongs to the Tom6 family. As to quaternary structure, forms part of the preprotein translocase complex of the outer mitochondrial membrane (TOM complex) which consists of at least 7 different proteins (TOMM5, TOMM6, TOMM7, TOMM20, TOMM22, TOMM40 and TOMM70).

The protein localises to the mitochondrion outer membrane. The polypeptide is Mitochondrial import receptor subunit TOM6 homolog (TOMM6) (Bos taurus (Bovine)).